The following is a 221-amino-acid chain: Ribose-5-phosphate isomerase A (221 aa).

Substrate contacts are provided by residues 26–29 (TGST), 81–84 (DGAD), and 94–97 (KGGG). Residue glutamate 103 is the Proton acceptor of the active site. Residue lysine 121 participates in substrate binding.

It belongs to the ribose 5-phosphate isomerase family. Homodimer.

It carries out the reaction aldehydo-D-ribose 5-phosphate = D-ribulose 5-phosphate. It functions in the pathway carbohydrate degradation; pentose phosphate pathway; D-ribose 5-phosphate from D-ribulose 5-phosphate (non-oxidative stage): step 1/1. In terms of biological role, catalyzes the reversible conversion of ribose-5-phosphate to ribulose 5-phosphate. This is Ribose-5-phosphate isomerase A from Bacillus mycoides (strain KBAB4) (Bacillus weihenstephanensis).